The chain runs to 383 residues: Teichoic acid glycerol-phosphate primase (383 aa).

Belongs to the CDP-glycerol glycerophosphotransferase family.

The protein localises to the cell membrane. The catalysed reaction is N-acetyl-beta-D-mannosaminyl-(1-&gt;4)-N-acetyl-alpha-D-glucosaminyl di-trans,octa-cis-undecaprenyl diphosphate + CDP-glycerol = 4-O-[(2R)-glycerylphospho]-N-acetyl-beta-D-mannosaminyl-(1-&gt;4)-N-acetyl-alpha-D-glucosaminyl di-trans,octa-cis-undecaprenyl diphosphate + CMP + H(+). It functions in the pathway cell wall biogenesis; poly(ribitol phosphate) teichoic acid biosynthesis. In terms of biological role, catalyzes the addition of a single glycerol phosphate residue to the prenoldiphosphate-linked disaccharide. This is Teichoic acid glycerol-phosphate primase (tarB) from Bacillus spizizenii (strain ATCC 23059 / NRRL B-14472 / W23) (Bacillus subtilis subsp. spizizenii).